We begin with the raw amino-acid sequence, 420 residues long: Tyrosine--tRNA ligase (420 aa).

An L-tyrosine-binding site is contributed by Tyr33. A 'HIGH' region motif is present at residues 38-47 (PTADSLHIGH). L-tyrosine is bound by residues Tyr168 and Gln172. The 'KMSKS' region motif lies at 231–235 (KFGKT). Lys234 serves as a coordination point for ATP. Residues 353–419 (MLLVDALIKV…GKKNYYLVKL (67 aa)) form the S4 RNA-binding domain.

The protein belongs to the class-I aminoacyl-tRNA synthetase family. TyrS type 1 subfamily. Homodimer.

It is found in the cytoplasm. The enzyme catalyses tRNA(Tyr) + L-tyrosine + ATP = L-tyrosyl-tRNA(Tyr) + AMP + diphosphate + H(+). Catalyzes the attachment of tyrosine to tRNA(Tyr) in a two-step reaction: tyrosine is first activated by ATP to form Tyr-AMP and then transferred to the acceptor end of tRNA(Tyr). This chain is Tyrosine--tRNA ligase, found in Desulfitobacterium hafniense (strain DSM 10664 / DCB-2).